A 745-amino-acid polypeptide reads, in one-letter code: Junction plakoglobin (745 aa).

Met-1 bears the N-acetylmethionine mark. The O-linked (GlcNAc) threonine glycan is linked to Thr-14. 2 positions are modified to phosphoserine: Ser-99 and Ser-125. ARM repeat units follow at residues 132–171 (NYQD…QLSK), 172–215 (KEAS…LSHH), 216–255 (REGL…NLLL), 258–297 (EGAK…LLAY), 298–341 (GNQE…LSVC), 342–381 (PSNK…NLSD), 383–420 (ATKQ…NLTC), 423–464 (SKNK…HLTS), 470–510 (EMAQ…NLAL), 512–551 (PANH…QPYT), 574–613 (PMNR…ELAQ), and 615–661 (KEAA…PDYR). The segment at 132 to 297 (NYQDDAELAT…TTDCLQLLAY (166 aa)) is interaction with DSC1 and DSG1. The residue at position 182 (Ser-182) is a Phosphoserine. The tract at residues 574–661 (PMNRMEIFRL…ISEDKNPDYR (88 aa)) is interaction with DSC1. 2 positions are modified to phosphoserine: Ser-665 and Ser-730.

Belongs to the beta-catenin family. Homodimer. Component of an E-cadherin/catenin adhesion complex composed of at least E-cadherin/CDH1 and gamma-catenin/JUP, and possibly alpha-catenin/CTNNA1; the complex is located to adherens junctions. The stable association of CTNNA1 is controversial as CTNNA1 was shown not to bind to F-actin when assembled in the complex. Interacts with MUC1. Interacts with CAV1. Interacts with PTPRJ. Interacts with DSG1. Interacts with DSC1 and DSC2. Interacts with PKP2. Interacts with PKP3 (via N-terminus); the interaction is required for PKP3 localization to desmosome cell-cell junctions. Interacts with DSG4. May be phosphorylated by FER.

Its subcellular location is the cell junction. The protein resides in the adherens junction. The protein localises to the desmosome. It is found in the cytoplasm. It localises to the cytoskeleton. Its subcellular location is the cell membrane. The protein resides in the nucleus. In terms of biological role, common junctional plaque protein. The membrane-associated plaques are architectural elements in an important strategic position to influence the arrangement and function of both the cytoskeleton and the cells within the tissue. The presence of plakoglobin in both the desmosomes and in the intermediate junctions suggests that it plays a central role in the structure and function of submembranous plaques. Acts as a substrate for VE-PTP and is required by it to stimulate VE-cadherin function in endothelial cells. Can replace beta-catenin in E-cadherin/catenin adhesion complexes which are proposed to couple cadherins to the actin cytoskeleton. In Sus scrofa (Pig), this protein is Junction plakoglobin.